Reading from the N-terminus, the 332-residue chain is Peroxidase C1C (332 aa).

An N-terminal signal peptide occupies residues 1-9 (MLHASFSNA). A Pyrrolidone carboxylic acid modification is found at Q10. 4 cysteine pairs are disulfide-bonded: C20–C100, C53–C58, C106–C310, and C186–C218. N22 carries an N-linked (GlcNAc...) asparagine glycan. Catalysis depends on H51, which acts as the Proton acceptor. 5 residues coordinate Ca(2+): D52, V55, G57, D59, and S61. Residue N66 is glycosylated (N-linked (GlcNAc...) asparagine). P148 serves as a coordination point for substrate. Residue H179 coordinates heme b. T180 is a Ca(2+) binding site. N-linked (GlcNAc...) asparagine glycans are attached at residues N195, N207, and N223. D231, T234, and D239 together coordinate Ca(2+). The N-linked (GlcNAc...) asparagine glycan is linked to N264.

It belongs to the peroxidase family. Classical plant (class III) peroxidase subfamily. Requires Ca(2+) as cofactor. Heme b serves as cofactor.

The protein localises to the secreted. The protein resides in the vacuole. It carries out the reaction 2 a phenolic donor + H2O2 = 2 a phenolic radical donor + 2 H2O. In terms of biological role, removal of H(2)O(2), oxidation of toxic reductants, biosynthesis and degradation of lignin, suberization, auxin catabolism, response to environmental stresses such as wounding, pathogen attack and oxidative stress. These functions might be dependent on each isozyme/isoform in each plant tissue. This is Peroxidase C1C (PRXC1C) from Armoracia rusticana (Horseradish).